We begin with the raw amino-acid sequence, 233 residues long: Large ribosomal subunit protein uL1 (233 aa).

The protein belongs to the universal ribosomal protein uL1 family. As to quaternary structure, part of the 50S ribosomal subunit.

Binds directly to 23S rRNA. The L1 stalk is quite mobile in the ribosome, and is involved in E site tRNA release. In terms of biological role, protein L1 is also a translational repressor protein, it controls the translation of the L11 operon by binding to its mRNA. This is Large ribosomal subunit protein uL1 from Brucella melitensis biotype 1 (strain ATCC 23456 / CCUG 17765 / NCTC 10094 / 16M).